A 201-amino-acid chain; its full sequence is UPF0376 protein F10G2.1 (201 aa).

Topologically, residues 1–3 (MKH) are cytoplasmic. A helical; Signal-anchor for type II membrane protein transmembrane segment spans residues 4–24 (FLLLAIIGILFLGSTYGASVA). Residues 25–201 (TEKLKASNCT…LLECDFRNIQ (177 aa)) lie on the Extracellular side of the membrane. 2 N-linked (GlcNAc...) asparagine glycosylation sites follow: Asn-32 and Asn-124.

It belongs to the UPF0376 family.

Its subcellular location is the membrane. In Caenorhabditis elegans, this protein is UPF0376 protein F10G2.1.